A 422-amino-acid chain; its full sequence is uncharacterized protein (422 aa).

It belongs to the asfivirus K421R family.

The protein localises to the virion. This is an uncharacterized protein from Ornithodoros (relapsing fever ticks).